The primary structure comprises 457 residues: Flavin-containing monooxygenase FMO GS-OX2 (457 aa).

FAD is bound at residue G17–G22. G211–G216 is a binding site for NADP(+).

Belongs to the FMO family.

The enzyme catalyses a (Z)-omega-(methylsulfanyl)-N-sulfo-alkylhydroximate S-glucoside + NADPH + O2 + H(+) = a (Z)-omega-(methylsulfinyl)-alkyl-glucosinolate + NADP(+) + H2O. Catalyzes the conversion of methylthioalkyl glucosinolates of any chain length into methylsulfinylalkyl glucosinolates. This chain is Flavin-containing monooxygenase FMO GS-OX2 (FMOGS-OX2), found in Arabidopsis thaliana (Mouse-ear cress).